Here is a 338-residue protein sequence, read N- to C-terminus: MLTERQLLILQTIIDDFIGSAQPVGSRTLAKKDEITYSSATIRNEMADLEELGFIEKTHSSSGRVPSEKGYRFYVDHLLAPQNLPNDEIVQIKDLFAERIFEAEKIAQQSAQILSELTNYTAIVLGPKLSTNKLKNVQIVPLDRQTAVAIIVTDTGHVQSKTITVPESVDLSDLEKMVNILNEKLSGVPMSELHNKIFKEIVTVLRGYVHNYDSAIKMLDGTFQVPLSEKIYFGGKANMLSQPEFHDIHKVRSLLTMIDNEAEFYDILRHKQVGIQVKIGRENSATAMEDCSLISATYSIGEEQLGTIAILGPTRMQYSRVISLLQLFTRQFTDGLKK.

Belongs to the HrcA family.

Negative regulator of class I heat shock genes (grpE-dnaK-dnaJ and groELS operons). Prevents heat-shock induction of these operons. This chain is Heat-inducible transcription repressor HrcA, found in Bacillus cereus (strain AH820).